We begin with the raw amino-acid sequence, 348 residues long: Heat-inducible transcription repressor HrcA (348 aa).

It belongs to the HrcA family.

Functionally, negative regulator of class I heat shock genes (grpE-dnaK-dnaJ and groELS operons). Prevents heat-shock induction of these operons. The chain is Heat-inducible transcription repressor HrcA from Syntrophobacter fumaroxidans (strain DSM 10017 / MPOB).